Consider the following 210-residue polypeptide: Interleukin-6 (210 aa).

The signal sequence occupies residues 1–25; the sequence is MNSLSTSAFSPVAFSLGLLLVMATA. An intrachain disulfide couples Cys72 to Cys78. Ser81 carries the post-translational modification Phosphoserine. Cys101 and Cys111 are oxidised to a cystine.

This sequence belongs to the IL-6 superfamily. As to quaternary structure, component of a hexamer of two molecules each of IL6, IL6R and IL6ST; first binds to IL6R to associate with the signaling subunit IL6ST. Interacts with IL6R (via the N-terminal ectodomain); this interaction may be affected by IL6R-binding with SORL1, hence decreasing IL6 cis signaling. Interacts with SORL1 (via the N-terminal ectodomain); this interaction leads to IL6 internalization and lysosomal degradation. May form a trimeric complex with the soluble SORL1 ectodomain and soluble IL6R receptor; this interaction might stabilize circulating IL6, hence promoting IL6 trans signaling.

The protein localises to the secreted. In terms of biological role, cytokine with a wide variety of biological functions in immunity, tissue regeneration, and metabolism. Binds to IL6R, then the complex associates to the signaling subunit IL6ST/gp130 to trigger the intracellular IL6-signaling pathway. The interaction with the membrane-bound IL6R and IL6ST stimulates 'classic signaling', whereas the binding of IL6 and soluble IL6R to IL6ST stimulates 'trans-signaling'. Alternatively, 'cluster signaling' occurs when membrane-bound IL6:IL6R complexes on transmitter cells activate IL6ST receptors on neighboring receiver cells. Functionally, IL6 is a potent inducer of the acute phase response. Rapid production of IL6 contributes to host defense during infection and tissue injury, but excessive IL6 synthesis is involved in disease pathology. In the innate immune response, is synthesized by myeloid cells, such as macrophages and dendritic cells, upon recognition of pathogens through toll-like receptors (TLRs) at the site of infection or tissue injury. In the adaptive immune response, is required for the differentiation of B cells into immunoglobulin-secreting cells. Plays a major role in the differentiation of CD4(+) T cell subsets. Essential factor for the development of T follicular helper (Tfh) cells that are required for the induction of germinal-center formation. Required to drive naive CD4(+) T cells to the Th17 lineage. Also required for proliferation of myeloma cells and the survival of plasmablast cells. Acts as an essential factor in bone homeostasis and on vessels directly or indirectly by induction of VEGF, resulting in increased angiogenesis activity and vascular permeability. Induces, through 'trans-signaling' and synergistically with IL1B and TNF, the production of VEGF. Involved in metabolic controls, is discharged into the bloodstream after muscle contraction increasing lipolysis and improving insulin resistance. 'Trans-signaling' in central nervous system also regulates energy and glucose homeostasis. Mediates, through GLP-1, crosstalk between insulin-sensitive tissues, intestinal L cells and pancreatic islets to adapt to changes in insulin demand. Also acts as a myokine. Plays a protective role during liver injury, being required for maintenance of tissue regeneration. Also has a pivotal role in iron metabolism by regulating HAMP/hepcidin expression upon inflammation or bacterial infection. Through activation of IL6ST-YAP-NOTCH pathway, induces inflammation-induced epithelial regeneration. The sequence is that of Interleukin-6 (IL6) from Mustela putorius furo (European domestic ferret).